Reading from the N-terminus, the 501-residue chain is ATP synthase subunit alpha (501 aa).

169 to 176 (GDRQTGKT) is an ATP binding site.

It belongs to the ATPase alpha/beta chains family. F-type ATPases have 2 components, CF(1) - the catalytic core - and CF(0) - the membrane proton channel. CF(1) has five subunits: alpha(3), beta(3), gamma(1), delta(1), epsilon(1). CF(0) has three main subunits: a(1), b(2) and c(9-12). The alpha and beta chains form an alternating ring which encloses part of the gamma chain. CF(1) is attached to CF(0) by a central stalk formed by the gamma and epsilon chains, while a peripheral stalk is formed by the delta and b chains.

It is found in the cell inner membrane. It carries out the reaction ATP + H2O + 4 H(+)(in) = ADP + phosphate + 5 H(+)(out). Produces ATP from ADP in the presence of a proton gradient across the membrane. The alpha chain is a regulatory subunit. The protein is ATP synthase subunit alpha of Campylobacter jejuni subsp. jejuni serotype O:23/36 (strain 81-176).